The primary structure comprises 201 residues: Large ribosomal subunit protein bL25 (201 aa).

Belongs to the bacterial ribosomal protein bL25 family. CTC subfamily. Part of the 50S ribosomal subunit; part of the 5S rRNA/L5/L18/L25 subcomplex. Contacts the 5S rRNA. Binds to the 5S rRNA independently of L5 and L18.

Functionally, this is one of the proteins that binds to the 5S RNA in the ribosome where it forms part of the central protuberance. This chain is Large ribosomal subunit protein bL25, found in Chlorobaculum parvum (strain DSM 263 / NCIMB 8327) (Chlorobium vibrioforme subsp. thiosulfatophilum).